A 138-amino-acid chain; its full sequence is Large ribosomal subunit protein uL16 (138 aa).

Residues 1–21 (MLIPRKVKHRKQHHPSLRGRA) are compositionally biased toward basic residues. Residues 1–22 (MLIPRKVKHRKQHHPSLRGRAK) form a disordered region.

The protein belongs to the universal ribosomal protein uL16 family. Part of the 50S ribosomal subunit.

Binds 23S rRNA and is also seen to make contacts with the A and possibly P site tRNAs. This is Large ribosomal subunit protein uL16 from Thermobifida fusca (strain YX).